The following is a 278-amino-acid chain: MIQSTQTWRVLAGGLAATAMGVTVFAGGTAAADPSPPAPPPAIPGVLPPASLPPIQSVTAVPGGITTNNRFVATPQAPGPAALGQPPLAVAAPVSESLHDYFKAKNIKLVAQKPHGFKALDITLPVPTRWTQVPDPNVPDAFAVIADRLGNSLYTSNAQLVVYNLVGNFDPKEAITHGFVDTQQLSAWQTTNASKADFDGFPSSIIEGTYRENGMTLNTSRRHVIASSGPDKYLVSLSVTTALSQAVADAPATNAIVNGFRVSSPTVSAPVPPQLGTR.

A signal peptide spans M1–G28.

It to M.tuberculosis Rv0040c.

The chain is Proline-rich 28 kDa antigen homolog from Mycobacterium leprae (strain TN).